The following is a 333-amino-acid chain: Gap junction alpha-4 protein (333 aa).

At 1-20 (MGDWGFLEKLLDQVQEHSTV) the chain is on the cytoplasmic side. A helical membrane pass occupies residues 21-40 (VGKIWLTVLFIFRILILGLA). At 41 to 76 (GESVWGDEQSDFECNTAQPGCTNVCYDQAFPISHIR) the chain is on the extracellular side. A helical transmembrane segment spans residues 77 to 99 (YWVLQFLFVSTPTLIYLGHVIYL). Topologically, residues 100 to 148 (SRREERLRQKEGELRALPSKDPHVERALAAIEHQMAKISVAEDGRLRIR) are cytoplasmic. Residues 149-171 (GALMGTYVISVLCKSVLEAGFLY) traverse the membrane as a helical segment. Over 172 to 208 (GQWRLYGWTMEPVFVCQRAPCPHVVDCYVSRPTEKTI) the chain is Extracellular. Residues 209 to 231 (FIIFMLVVGVISLVLNLLELVHL) form a helical membrane-spanning segment. Over 232-333 (LCRCVSREIK…NSSASKKQYV (102 aa)) the chain is Cytoplasmic. Positions 292-333 (ANLTTEERLTSTRPPPFVNAAPQGGQKSSSRPNSSASKKQYV) are disordered. Residues 318-333 (KSSSRPNSSASKKQYV) are compositionally biased toward low complexity.

It belongs to the connexin family. Alpha-type (group II) subfamily. In terms of assembly, a connexon is composed of a hexamer of connexins. As to expression, highly expressed in lung.

The protein localises to the cell membrane. The protein resides in the cell junction. Its subcellular location is the gap junction. One gap junction consists of a cluster of closely packed pairs of transmembrane channels, the connexons, through which materials of low MW diffuse from one cell to a neighboring cell. The chain is Gap junction alpha-4 protein (Gja4) from Rattus norvegicus (Rat).